The sequence spans 783 residues: MLVDNQTSTTTNLVGTKRKSPENDFIMTIDIAGDDDFVDDDENDDDEDLKEDFFFEESDKPQLPWDFAPTIEKMKQQTHKKTDGQTSLEDKINQRKTVKKLKADDDKSVTTKTTNNNKSKKSNNNDNDDDDEEVNEEEEEEEEEEDNENEKEINKKQQQQQQQSNKQTTDKIKVLQSNRKLKKIVEEELPTFEELHLSRPLLKAVQKLGFSQPTPIQAKAIPLALNGKDILASASTGSGKTAAFLLPVLERLLFRDSEYRAIRVLILLPTRELALQCQSVMENLAQFSNITSCLIVGGLSNKAQEVELRKSPDVVIATPGRLIDHLLNAHGIGLDDLEILILDEADRLLDMGFKDEINKIVESCPTNRQTMLFSATLNDEVKTLAKLSLQQPIRVQVDALMQVTSTLEQEFVKIKPQHLSDRPAILLSLCTRVFNQGGTIIFCRSKKEVHRLRIIFGLSDLKAAELHGNLSQEQRFDSLQQFRDGQVNYLLASDVASRGLDIIGVKTVINYNMPNNMANYIHRVGRTARAGMDGKSCSFITDNDRKLLKDIVTKARNKAKSRSVSQDNVNFWRNRIEELTEDIKSIVREEMKEADLRKAEKTLDKAEKIISNADANVETPKVWYKTKQEEDKSKELWKIENNIVNPGKKLKAPIDVTGVNNVPSIKKLKQKKDPYYGLSRKQRRHRQFKEEFEREQQEERKRKGGDDGDDNEEIDSGKMFERSQRAQKSSGKETKRIESLRRNYMAGGALTDQEKQRVDNKKSKKNKRMIVNKKEKKQRLSKK.

Residues 1-14 are compositionally biased toward polar residues; that stretch reads MLVDNQTSTTTNLV. 2 disordered regions span residues 1–20 and 56–173; these read MLVD…KRKS and EESD…DKIK. The span at 72–93 shows a compositional bias: basic and acidic residues; that stretch reads EKMKQQTHKKTDGQTSLEDKIN. Residues 72–180 are a coiled coil; it reads EKMKQQTHKK…KIKVLQSNRK (109 aa). Over residues 110 to 125 the composition is skewed to low complexity; it reads TTKTTNNNKSKKSNNN. Over residues 126-149 the composition is skewed to acidic residues; sequence DNDDDDEEVNEEEEEEEEEEDNEN. Positions 156 to 167 are enriched in low complexity; the sequence is KQQQQQQQSNKQ. The Q motif signature appears at 190 to 218; it reads PTFEELHLSRPLLKAVQKLGFSQPTPIQA. Residues 221-395 form the Helicase ATP-binding domain; sequence IPLALNGKDI…KLSLQQPIRV (175 aa). 234–241 serves as a coordination point for ATP; sequence ASTGSGKT. The short motif at 343-346 is the DEAD box element; it reads DEAD. The Helicase C-terminal domain occupies 406-570; that stretch reads TLEQEFVKIK…SRSVSQDNVN (165 aa). Residues 665 to 783 form a disordered region; sequence IKKLKQKKDP…KEKKQRLSKK (119 aa). 3 stretches are compositionally biased toward basic and acidic residues: residues 688-706, 715-741, and 752-761; these read FKEE…KGGD, DSGK…ESLR, and DQEKQRVDNK. Over residues 762 to 783 the composition is skewed to basic residues; that stretch reads KSKKNKRMIVNKKEKKQRLSKK.

It belongs to the DEAD box helicase family. DDX27/DRS1 subfamily.

The protein localises to the nucleus. It is found in the nucleolus. The protein resides in the chromosome. It carries out the reaction ATP + H2O = ADP + phosphate + H(+). Probable ATP-dependent RNA helicase. Component of the nucleolar ribosomal RNA (rRNA) processing machinery that may be involved in ribosome biogenesis. In Dictyostelium discoideum (Social amoeba), this protein is Probable ATP-dependent RNA helicase ddx27 (ddx27).